The primary structure comprises 439 residues: GTPase Der (439 aa).

EngA-type G domains lie at 4-169 (AMVS…PQEE) and 177-352 (IKIA…EEYN). Residues 10-17 (GRPNVGKS), 57-61 (DTGGL), 120-123 (NKVD), 183-190 (GKPNVGKS), 230-234 (DTAGI), and 295-298 (NKWD) contribute to the GTP site. Positions 353-437 (KRITTGLLNN…PVVISTRKRG (85 aa)) constitute a KH-like domain.

The protein belongs to the TRAFAC class TrmE-Era-EngA-EngB-Septin-like GTPase superfamily. EngA (Der) GTPase family. In terms of assembly, associates with the 50S ribosomal subunit.

Its function is as follows. GTPase that plays an essential role in the late steps of ribosome biogenesis. In Thermoanaerobacter pseudethanolicus (strain ATCC 33223 / 39E) (Clostridium thermohydrosulfuricum), this protein is GTPase Der.